The following is a 258-amino-acid chain: UDP-2,3-diacylglucosamine hydrolase (258 aa).

Residues aspartate 15, histidine 17, aspartate 48, asparagine 88, and histidine 123 each contribute to the Mn(2+) site. 88–89 contributes to the substrate binding site; the sequence is NR. Substrate is bound by residues aspartate 131, serine 169, asparagine 173, lysine 176, and histidine 204. Mn(2+)-binding residues include histidine 204 and histidine 206.

It belongs to the LpxH family. Mn(2+) is required as a cofactor.

It localises to the cell inner membrane. The enzyme catalyses UDP-2-N,3-O-bis[(3R)-3-hydroxytetradecanoyl]-alpha-D-glucosamine + H2O = 2-N,3-O-bis[(3R)-3-hydroxytetradecanoyl]-alpha-D-glucosaminyl 1-phosphate + UMP + 2 H(+). It participates in glycolipid biosynthesis; lipid IV(A) biosynthesis; lipid IV(A) from (3R)-3-hydroxytetradecanoyl-[acyl-carrier-protein] and UDP-N-acetyl-alpha-D-glucosamine: step 4/6. Its function is as follows. Hydrolyzes the pyrophosphate bond of UDP-2,3-diacylglucosamine to yield 2,3-diacylglucosamine 1-phosphate (lipid X) and UMP by catalyzing the attack of water at the alpha-P atom. Involved in the biosynthesis of lipid A, a phosphorylated glycolipid that anchors the lipopolysaccharide to the outer membrane of the cell. In Bordetella pertussis (strain Tohama I / ATCC BAA-589 / NCTC 13251), this protein is UDP-2,3-diacylglucosamine hydrolase.